Consider the following 213-residue polypeptide: Sclerostin (213 aa).

Residues 1–28 (MQLSLAPCLACLLVHAAFVAVESQGWQA) form the signal peptide. Residue asparagine 53 is glycosylated (N-linked (GlcNAc...) asparagine). Cystine bridges form between cysteine 80–cysteine 134, cysteine 94–cysteine 148, cysteine 105–cysteine 165, and cysteine 109–cysteine 167. Residues 82–172 (ELHYTRFVTD…ASCKCKRLTR (91 aa)) enclose the CTCK domain. Asparagine 175 is a glycosylation site (N-linked (GlcNAc...) asparagine). The segment at 178–213 (ELKDFGPETARPQKGRKPRPRARGAKANQAELENAY) is disordered. Over residues 190–201 (QKGRKPRPRARG) the composition is skewed to basic residues.

The protein belongs to the sclerostin family. As to quaternary structure, interacts with LRP4 (via the extracellular domain); the interaction facilitates the inhibition of Wnt signaling. Interacts with LRP5 (via the first two YWTD-EGF repeat domains); the interaction inhibits Wnt-mediated signaling. Interacts with LRP6.

The protein localises to the secreted. Negative regulator of bone growth that acts through inhibition of Wnt signaling and bone formation. This Rattus norvegicus (Rat) protein is Sclerostin.